Reading from the N-terminus, the 131-residue chain is Peptidyl-prolyl cis-trans isomerase NIMA-interacting 4 (131 aa).

The necessary for nuclear localization and DNA-binding stretch occupies residues 1–25 (MPPKGKSGSGKGGKGGAASGSDSAD). A disordered region spans residues 1-39 (MPPKGKSGSGKGGKGGAASGSDSADKKSQGPKGGGNAVK). Residues 1–41 (MPPKGKSGSGKGGKGGAASGSDSADKKSQGPKGGGNAVKVR) are necessary for association with the pre-rRNP complexes. Over residues 7-18 (SGSGKGGKGGAA) the composition is skewed to gly residues. A Phosphoserine; by CK2 modification is found at serine 19. A PpiC domain is found at 35–129 (GNAVKVRHIL…FGYHIIMVEG (95 aa)).

It belongs to the PpiC/parvulin rotamase family. PIN4 subfamily. As to quaternary structure, found in pre-ribosomal ribonucleoprotein (pre-rRNP) complexes. Post-translationally, phosphorylated. Phosphorylation occurs both in the nucleus and the cytoplasm. Phosphorylation at Ser-19 does not affect its PPIase activity but is required for nuclear localization, and the dephosphorylation is a prerequisite for the binding to DNA. The unphosphorylated form associates with the pre-rRNP complexes in the nucleus.

Its subcellular location is the nucleus. The protein localises to the nucleolus. It localises to the cytoplasm. It is found in the cytoskeleton. The protein resides in the spindle. It catalyses the reaction [protein]-peptidylproline (omega=180) = [protein]-peptidylproline (omega=0). In terms of biological role, involved as a ribosomal RNA processing factor in ribosome biogenesis. Binds to tightly bent AT-rich stretches of double-stranded DNA. The sequence is that of Peptidyl-prolyl cis-trans isomerase NIMA-interacting 4 (Pin4) from Mus musculus (Mouse).